The following is a 379-amino-acid chain: UDP-N-acetylglucosamine--N-acetylmuramyl-(pentapeptide) pyrophosphoryl-undecaprenol N-acetylglucosamine transferase (379 aa).

UDP-N-acetyl-alpha-D-glucosamine-binding positions include 19–21, Asn-133, Arg-174, Ser-207, Ile-261, and Gln-306; that span reads TGG.

The protein belongs to the glycosyltransferase 28 family. MurG subfamily.

Its subcellular location is the cell inner membrane. It carries out the reaction di-trans,octa-cis-undecaprenyl diphospho-N-acetyl-alpha-D-muramoyl-L-alanyl-D-glutamyl-meso-2,6-diaminopimeloyl-D-alanyl-D-alanine + UDP-N-acetyl-alpha-D-glucosamine = di-trans,octa-cis-undecaprenyl diphospho-[N-acetyl-alpha-D-glucosaminyl-(1-&gt;4)]-N-acetyl-alpha-D-muramoyl-L-alanyl-D-glutamyl-meso-2,6-diaminopimeloyl-D-alanyl-D-alanine + UDP + H(+). The protein operates within cell wall biogenesis; peptidoglycan biosynthesis. Functionally, cell wall formation. Catalyzes the transfer of a GlcNAc subunit on undecaprenyl-pyrophosphoryl-MurNAc-pentapeptide (lipid intermediate I) to form undecaprenyl-pyrophosphoryl-MurNAc-(pentapeptide)GlcNAc (lipid intermediate II). The sequence is that of UDP-N-acetylglucosamine--N-acetylmuramyl-(pentapeptide) pyrophosphoryl-undecaprenol N-acetylglucosamine transferase from Porphyromonas gingivalis (strain ATCC 33277 / DSM 20709 / CIP 103683 / JCM 12257 / NCTC 11834 / 2561).